A 234-amino-acid chain; its full sequence is Cell polarity protein alp11 (234 aa).

The 85-residue stretch at isoleucine 4 to histidine 88 folds into the Ubiquitin-like domain. In terms of domain architecture, CAP-Gly spans valine 174–arginine 216. Serine 213 carries the phosphoserine modification.

The protein belongs to the TBCB family. As to quaternary structure, binds to monomeric alpha-tubulin. Interacts with alp21.

Its subcellular location is the cytoplasm. It is found in the cytoskeleton. Required for microtubule function and cell polarity. Involved in the proper folding of alpha-tubulin. This Schizosaccharomyces pombe (strain 972 / ATCC 24843) (Fission yeast) protein is Cell polarity protein alp11 (alp11).